A 382-amino-acid chain; its full sequence is Inactive serine protease 54 (382 aa).

The first 20 residues, 1–20 (MAELRGILLLLLYMSHSSSA), serve as a signal peptide directing secretion. The region spanning 29-258 (IVDQLHENLV…YSNWIIAKTR (230 aa)) is the Peptidase S1 domain. The N-linked (GlcNAc...) asparagine glycan is linked to asparagine 113. 3 disulfides stabilise this stretch: cysteine 154–cysteine 216, cysteine 185–cysteine 195, and cysteine 206–cysteine 237.

Belongs to the peptidase S1 family. Plasma kallikrein subfamily.

The protein resides in the secreted. This is Inactive serine protease 54 (Prss54) from Rattus norvegicus (Rat).